The sequence spans 82 residues: Small ribosomal subunit protein bS18A (82 aa).

Belongs to the bacterial ribosomal protein bS18 family. As to quaternary structure, part of the 30S ribosomal subunit. Forms a tight heterodimer with protein bS6.

In terms of biological role, binds as a heterodimer with protein bS6 to the central domain of the 16S rRNA, where it helps stabilize the platform of the 30S subunit. In Streptomyces griseus subsp. griseus (strain JCM 4626 / CBS 651.72 / NBRC 13350 / KCC S-0626 / ISP 5235), this protein is Small ribosomal subunit protein bS18A.